The chain runs to 241 residues: CRISPR-associated endoribonuclease Cas6 2 (241 aa).

The Proton acceptor role is filled by Y28. H40 serves as the catalytic Proton donor.

The protein belongs to the CRISPR-associated protein Cas6/Cse3/CasE family.

In terms of biological role, CRISPR (clustered regularly interspaced short palindromic repeat) is an adaptive immune system that provides protection against mobile genetic elements (viruses, transposable elements and conjugative plasmids). CRISPR clusters contain sequences complementary to antecedent mobile elements and target invading nucleic acids. CRISPR clusters are transcribed and processed into CRISPR RNA (crRNA). This protein processes pre-crRNA into individual crRNA units. The chain is CRISPR-associated endoribonuclease Cas6 2 (cas6b) from Methanocaldococcus jannaschii (strain ATCC 43067 / DSM 2661 / JAL-1 / JCM 10045 / NBRC 100440) (Methanococcus jannaschii).